Reading from the N-terminus, the 428-residue chain is Immunoglobulin superfamily containing leucine-rich repeat protein (428 aa).

The signal sequence occupies residues 1–18 (MQELRLLCLVVLVGLAQA). The LRRNT domain maps to 19–50 (CPEPCECGEKYGFHIADCAYRDLQAVPSGFPA). Residue N51 is glycosylated (N-linked (GlcNAc...) asparagine). LRR repeat units follow at residues 51–72 (NVTT…AFRE), 75–96 (RLQS…ALAS), 99–122 (QLKS…HSLS), 123–144 (ALQL…AFRS), and 147–168 (ALRS…TFAP). An LRRCT domain is found at 180–231 (NPFDCTCGIVWFKTWALTTAVSIPEQDNITCTSPHVLKGTRLNRLLPLPCSA). In terms of domain architecture, Ig-like spans 232-343 (PSVQLTYQPS…GSAESSVNVA (112 aa)). Cysteines 257 and 327 form a disulfide. N-linked (GlcNAc...) asparagine glycosylation is present at N309.

The protein resides in the secreted. The chain is Immunoglobulin superfamily containing leucine-rich repeat protein (ISLR) from Bos taurus (Bovine).